The following is a 498-amino-acid chain: Guanosine-5'-triphosphate,3'-diphosphate pyrophosphatase (498 aa).

It belongs to the GppA/Ppx family. GppA subfamily.

The catalysed reaction is guanosine 3'-diphosphate 5'-triphosphate + H2O = guanosine 3',5'-bis(diphosphate) + phosphate + H(+). It participates in purine metabolism; ppGpp biosynthesis; ppGpp from GTP: step 2/2. In terms of biological role, catalyzes the conversion of pppGpp to ppGpp. Guanosine pentaphosphate (pppGpp) is a cytoplasmic signaling molecule which together with ppGpp controls the 'stringent response', an adaptive process that allows bacteria to respond to amino acid starvation, resulting in the coordinated regulation of numerous cellular activities. The chain is Guanosine-5'-triphosphate,3'-diphosphate pyrophosphatase from Yersinia enterocolitica serotype O:8 / biotype 1B (strain NCTC 13174 / 8081).